The sequence spans 288 residues: Probable anion import ATP-binding protein HVO_1886 (288 aa).

Residues 1–18 are compositionally biased toward basic and acidic residues; it reads MTTERPDAGDSGSEKPDE. The segment at 1–33 is disordered; it reads MTTERPDAGDSGSEKPDETAAPDPAANGARRSK. In terms of domain architecture, ABC transporter spans 36–282; sequence LAARSLGHGF…PDDDRVRQFV (247 aa). 68 to 75 is an ATP binding site; it reads GPSGTGKT.

The protein belongs to the ABC transporter superfamily. As to quaternary structure, the complex is composed of two ATP-binding proteins (HVO_1886), two transmembrane proteins (HVO_1887) and a solute-binding protein (HVO_1888).

The protein resides in the cell membrane. Its function is as follows. Part of an ABC transporter complex involved in anions import. Responsible for energy coupling to the transport system. The sequence is that of Probable anion import ATP-binding protein HVO_1886 from Haloferax volcanii (strain ATCC 29605 / DSM 3757 / JCM 8879 / NBRC 14742 / NCIMB 2012 / VKM B-1768 / DS2) (Halobacterium volcanii).